The chain runs to 421 residues: Anhydromevalonate phosphate decarboxylase (421 aa).

Mn(2+) is bound by residues Asn131 and Glu194. Residue Asp240 is the Proton acceptor of the active site.

Belongs to the UbiD family. It depends on prenylated FMN as a cofactor. Requires Mn(2+) as cofactor.

The catalysed reaction is (2E)-3-methyl-5-phosphooxypent-2-enoate + H(+) = isopentenyl phosphate + CO2. Its pathway is isoprenoid biosynthesis; isopentenyl diphosphate biosynthesis via mevalonate pathway. Its function is as follows. Catalyzes the conversion of trans-anhydromevalonate 5-phosphate (tAHMP) into isopentenyl phosphate. Involved in the archaeal mevalonate (MVA) pathway, which provides fundamental precursors for isoprenoid biosynthesis, such as isopentenyl diphosphate (IPP) and dimethylallyl diphosphate (DMAPP). The protein is Anhydromevalonate phosphate decarboxylase of Methanocaldococcus jannaschii (strain ATCC 43067 / DSM 2661 / JAL-1 / JCM 10045 / NBRC 100440) (Methanococcus jannaschii).